The chain runs to 218 residues: UPF0598 protein C8orf82 homolog (218 aa).

The protein belongs to the UPF0598 family.

This chain is UPF0598 protein C8orf82 homolog, found in Bos taurus (Bovine).